The primary structure comprises 456 residues: Exodeoxyribonuclease 7 large subunit (456 aa).

The protein belongs to the XseA family. As to quaternary structure, heterooligomer composed of large and small subunits.

The protein localises to the cytoplasm. The catalysed reaction is Exonucleolytic cleavage in either 5'- to 3'- or 3'- to 5'-direction to yield nucleoside 5'-phosphates.. Functionally, bidirectionally degrades single-stranded DNA into large acid-insoluble oligonucleotides, which are then degraded further into small acid-soluble oligonucleotides. The sequence is that of Exodeoxyribonuclease 7 large subunit from Azotobacter vinelandii (strain DJ / ATCC BAA-1303).